We begin with the raw amino-acid sequence, 736 residues long: Gephyrin (736 aa).

The interval 14-166 (QIRVGVLTVS…FILPALPHAI (153 aa)) is MPT Mo-transferase. The tract at residues 140–316 (LIINLPGSKK…VDITKVARRH (177 aa)) is interaction with GABARAP. Disordered regions lie at residues 181–232 (DELE…DSSS) and 260–290 (TASLSTTPSESPRAQATSRLSTASCPTPKVQ). Residues 187-199 (PSPPPPLSPPPTT) are compositionally biased toward pro residues. Phosphoserine is present on residues Ser-188 and Ser-194. A Phosphothreonine modification is found at Thr-198. Ser-200 bears the Phosphoserine mark. The S-palmitoyl cysteine moiety is linked to residue Cys-212. The span at 261-290 (ASLSTTPSESPRAQATSRLSTASCPTPKVQ) shows a compositional bias: polar residues. At Ser-262 the chain carries Phosphoserine. 2 positions are modified to phosphothreonine: Thr-265 and Thr-266. Phosphoserine is present on residues Ser-268 and Ser-270. Cys-284 carries S-palmitoyl cysteine lipidation. The residue at position 305 (Ser-305) is a Phosphoserine. The interval 326 to 736 (MDKAFITVLE…VVDVMVIGRL (411 aa)) is MPT adenylyltransferase.

This sequence in the N-terminal section; belongs to the MoaB/Mog family. In the C-terminal section; belongs to the MoeA family. In terms of assembly, homotrimer, homodimer and homooligomer. Interacts with GABARAP. Interacts with SRGAP2 (via SH3 domain). Interacts with GABRA3. Interacts with GLRB. GABRA3 and GLRB occupy overlapping binding sites. Interacts with ARHGAP32; IQSEC3, INSYN1 and INSYN2A. Mg(2+) is required as a cofactor. Post-translationally, palmitoylated. Palmitoylation is stimulated by GABA type A receptors activity. Palmitoylation by ZDHHC12 regulates clustering at synapses.

It is found in the postsynaptic cell membrane. It localises to the cell membrane. Its subcellular location is the cytoplasm. The protein resides in the cytosol. The protein localises to the cytoskeleton. It is found in the cell projection. It localises to the dendrite. Its subcellular location is the postsynaptic density. It carries out the reaction molybdopterin + ATP + H(+) = adenylyl-molybdopterin + diphosphate. It catalyses the reaction adenylyl-molybdopterin + molybdate = Mo-molybdopterin + AMP + H(+). It participates in cofactor biosynthesis; molybdopterin biosynthesis. With respect to regulation, inhibited by copper and tungsten. Microtubule-associated protein involved in membrane protein-cytoskeleton interactions. It is thought to anchor the inhibitory glycine receptor (GLYR) to subsynaptic microtubules. Acts as a major instructive molecule at inhibitory synapses, where it also clusters GABA type A receptors. Functionally, also has a catalytic activity and catalyzes two steps in the biosynthesis of the molybdenum cofactor. In the first step, molybdopterin is adenylated. Subsequently, molybdate is inserted into adenylated molybdopterin and AMP is released. The chain is Gephyrin from Homo sapiens (Human).